A 117-amino-acid chain; its full sequence is UPF0231 protein HI_1724 (117 aa).

Belongs to the UPF0231 family.

This chain is UPF0231 protein HI_1724, found in Haemophilus influenzae (strain ATCC 51907 / DSM 11121 / KW20 / Rd).